Here is a 378-residue protein sequence, read N- to C-terminus: uncharacterized protein (378 aa).

Low complexity predominate over residues 150–176; sequence TTTATTSNNRFNNNNSNNNNINNNNDN. The segment at 150 to 187 is disordered; sequence TTTATTSNNRFNNNNSNNNNINNNNDNNNKEQKKESRC. A compositionally biased stretch (basic and acidic residues) spans 177-187; the sequence is NNKEQKKESRC.

This is an uncharacterized protein from Dictyostelium discoideum (Social amoeba).